The primary structure comprises 154 residues: 6,7-dimethyl-8-ribityllumazine synthase (154 aa).

Residues F22, 56–58 (AFE), and 80–82 (AVI) each bind 5-amino-6-(D-ribitylamino)uracil. 85–86 (AT) is a (2S)-2-hydroxy-3-oxobutyl phosphate binding site. The Proton donor role is filled by H88. F113 serves as a coordination point for 5-amino-6-(D-ribitylamino)uracil. R127 serves as a coordination point for (2S)-2-hydroxy-3-oxobutyl phosphate.

Belongs to the DMRL synthase family.

It carries out the reaction (2S)-2-hydroxy-3-oxobutyl phosphate + 5-amino-6-(D-ribitylamino)uracil = 6,7-dimethyl-8-(1-D-ribityl)lumazine + phosphate + 2 H2O + H(+). It participates in cofactor biosynthesis; riboflavin biosynthesis; riboflavin from 2-hydroxy-3-oxobutyl phosphate and 5-amino-6-(D-ribitylamino)uracil: step 1/2. Its function is as follows. Catalyzes the formation of 6,7-dimethyl-8-ribityllumazine by condensation of 5-amino-6-(D-ribitylamino)uracil with 3,4-dihydroxy-2-butanone 4-phosphate. This is the penultimate step in the biosynthesis of riboflavin. The protein is 6,7-dimethyl-8-ribityllumazine synthase of Syntrophobacter fumaroxidans (strain DSM 10017 / MPOB).